The sequence spans 770 residues: uncharacterized protein (770 aa).

A disordered region spans residues 736–770 (GSGQPGQSPANVGDDPNRMVQSSASQTQIGHVFNN). Positions 754-770 (MVQSSASQTQIGHVFNN) are enriched in polar residues.

This is an uncharacterized protein from Caenorhabditis elegans.